The following is a 143-amino-acid chain: Succinate dehydrogenase assembly factor 2, mitochondrial (143 aa).

Belongs to the SDHAF2 family. As to quaternary structure, interacts with the flavoprotein subunit within the SDH catalytic dimer.

It localises to the mitochondrion matrix. Its function is as follows. Plays an essential role in the assembly of succinate dehydrogenase (SDH), an enzyme complex (also referred to as respiratory complex II) that is a component of both the tricarboxylic acid (TCA) cycle and the mitochondrial electron transport chain, and which couples the oxidation of succinate to fumarate with the reduction of ubiquinone (coenzyme Q) to ubiquinol. Required for flavinylation (covalent attachment of FAD) of the flavoprotein subunit of the SDH catalytic dimer. The chain is Succinate dehydrogenase assembly factor 2, mitochondrial from Schizosaccharomyces japonicus (strain yFS275 / FY16936) (Fission yeast).